A 1963-amino-acid chain; its full sequence is MEKYFGEKQERFSFRKLSVGLVSATISSLFFMSVLASSSVDAQETAGVHYKYVADSELSSEEKKQLVYDIPTYVENDDETYYLVYKLNSQNQLAELPNTGSKNERQALVAGASLAALGILIFAVSKKKVKNKTVLHLVLVAGMGNGVLVSVHALENHLLLNYNTDYELTSGEKLPLPKEISGYTYIGYIKEGKTTSDFEVSNQEKSAATPTKQQKVDYNVTPNFVDHPSTVQAIQEQTPVSSTKPTEVQVVEKPFSTELINPRKEEKQSSDSQEQLAEHKNLETKKEEKISPKEKTGVNTLNPQDEVLSGQLNKPELLYREETIETKIDFQEEIQENPDLAEGTVRVKQEGKLGKKVEIVRIFSVNKEEVSREIVSTSTTAPSPRIVEKGTKKTQVIKEQPETGVEHKDVQSGAIVEPAIQPELPEAVVSDKGEPEVQPTLPEAVVTDKGETEVQPESPDTVVSDKGEPEQVAPLPEYKGNIEQVKPETPVEKTKEQGPEKTEEVPVKPTEETPVNPNEGTTEGTSIQEAENPVQPAEESTTNSEKVSPDTSSENTGEVSSNPSDSTTSVGESNKPEHNDSKNENSEKTVEEVPVNPNEGTVEGTSNQETEKPVQPAEETQTNSGKIANENTGEVSNKPSDSKPPVEESNQPEKNGTATKPENSGNTTSENGQTEPEKKLELRNVSDIELYSQTNGTYRQHVSLDGIPENTDTYFVKVKSSAFKDVYIPVASITEEKRNGQSVYKITAKAEKLQQELENKYVDNFTFYLDKKAKEENTNFTSFSNLVKAINQNPSGTYHLAASLNANEVELGPDERSYIKDTFTGRLIGEKDGKNYAIYNLKKPLFENLSGATVEKLSLKNVAISGKNDIGSLANEATNGTKIKQVHVDGVLAGERGVGGLLAKADQSSIAESSFKGRIVNTYETTDAYNIGGLVGHLTGKNASIAKSKATVTISSNTNRSDQTVGGLAGLVDQDAHIQNSYAEGDINNVKHFGKVAGVAGYLWDRTSGEEKHAGELTNVLSDVNVTNGNAITGYHYTGMKVANTFSSKANRVFNVTLEKDEVVSKESFEERGTMLDASQIVSKKAEINPLTLPTVEPLSTSGKKDSDFSKIAHYQANRALVYKNIEKLLPFYNKSTIVKYGNLVKENSLLYQKELLSAVMMKDDQVITDIVSNKQTANKLLLHYNDHSSEKFDLKYQTDFANLAEYNLGNTGLLYTPNQFLYDRDSIVKEVLPELQKLDYQSDAIRKTLGISPEVKLTELYLEDQFSKTKQNLGDSLKKLLSADAGLASDNSVTRGYLVDKIKNNKEALLLGLTYLERWYNFNYGQVNVKDLVMYHPDFFGKGNTSPLDTLIELGKSGFNNLLAKNNVDTYGISLASQHGATDLFSTLEHYRKVFLPNTSNNDWFKSETKAYIVEEKSTIEEVKTKQGLAGTKYSIGVYDRITSATWKYRNMVLPLLTLPERSVFVISTMSSLGFGAYDRYRSSDHKAGKALNDFVEENARETAKRQRDHYDYWYRILDEQSREKLYRTILLYDAYKFGDDTTSGKATAEAKFDSSNPAMKNFFGPVGNKVVHNQHGAYATGDGVYYMSYRMLDKDGAITYTHEMTHDSDQDIYLGGYGRRNGLGPEFFAKGLLQAPDQPSDATITINSILKHSKSDSTEGSRLQVLDPTERFQNAADLQNYVHNMFDLIYMMEYLEGQSIVNKLSVYQKMAALRKIENKYVKDPADGNEVYATNVVKELTEAEARNLNSFESLIDHNILSAREYQSGDYERNGYYTIKLFAPIYSALSSEKGTPGDLMGRRIAYELLAAKGFKDGMVPYISNQYEEDAKQQGQTINLYGKERGLVTDELVLKKVFDGKYKTWAEFKTAMYQERVDQFGNLKQVTFKDPTKPWPSYGTKTINNVDELQALMDQAVLKDAEGPRWSNYDPEIDSAVHKLKRAIFKAYLDQTNDFRSSIFENKK.

Residues Met1–Ala36 form the signal peptide. Positions Ser37–Thr99 are excised as a propeptide. An LPXTG sorting signal motif is present at residues Leu96–Gly100. Thr99 is modified (pentaglycyl murein peptidoglycan amidated threonine). 2 consecutive transmembrane segments (helical) span residues Gln106 to Ser125 and Lys132 to Leu154. Over Glu155–Lys1963 the chain is Extracellular. The tract at residues Lys253 to Asp305 is disordered. Residues Leu276–Thr296 are compositionally biased toward basic and acidic residues. One can recognise a G5 domain in the interval Lys314 to Lys393. Residues Glu402–Glu681 form a disordered region. A run of 3 repeats spans residues Ala419–Pro435, Glu436–Thr452, and Glu453–Pro469. Positions Ala419–Pro469 are 3 X 17 AA approximate tandem repeats. Residues Val485–Glu511 show a composition bias toward basic and acidic residues. Composition is skewed to polar residues over residues Asn516–Glu529 and Glu538–Glu572. The segment covering Asn574–Glu591 has biased composition (basic and acidic residues). Polar residues-rich tracts occupy residues Glu618–Pro639 and Glu648–Thr674. Residue His1604 coordinates Zn(2+). The active site involves Glu1605. His1608 and Glu1628 together coordinate Zn(2+).

Belongs to the peptidase M26 family. Zn(2+) serves as cofactor. Post-translationally, the Gram-positive cell-wall anchor motif LPXTG is located in the N-terminal part, in contrast to such motifs in other known streptococcal and staphylococcal proteins. The protease could be cleaved by the sortase and anchored in the membrane via the two potential N-terminal transmembrane domains, whereas the propeptide located prior to the LPXTG motif would remain attached to the cell wall peptidoglycan by an amide bond.

The protein localises to the secreted. The protein resides in the cell wall. It is found in the membrane. The catalysed reaction is Cleavage of Pro-|-Thr bond in the hinge region of the heavy chain of human IgA.. Functionally, zinc metalloproteinase which cleaves human immunoglobulin A1 (IgA1) in the hinge region. The chain is Immunoglobulin A1 protease (iga) from Streptococcus pneumoniae (strain ATCC BAA-255 / R6).